A 305-amino-acid chain; its full sequence is MSIRILPENEIKQAASSFQNPPLLFANPKNLYFRRAKRLRQLAENNPFGDYLEFAANLSEVQLDLLENHPIANYAEKLTACIEESNGQKPLNAKTFKRSSEWRELLLLLTEKFKPYANDTMLATIELLEKSSTSELEALADDLLNERYEAVGADKAVFLWAALSLYWTQLAQQLPRNTQTEVGERHTCPVCDSAPIVSVVHFGDTQGLRYLHCSLCESEWNMVRSQCSVCDQSGKLDYWSIDSVDAPVKAESCGDCESYLKVLYQEKDPHVEPVADDLGTLFLDAEMEQKGFARSGLNPFLFQVE.

The protein belongs to the FdhE family.

The protein localises to the cytoplasm. Functionally, necessary for formate dehydrogenase activity. This Actinobacillus pleuropneumoniae serotype 7 (strain AP76) protein is Protein FdhE homolog.